We begin with the raw amino-acid sequence, 105 residues long: Large ribosomal subunit protein uL24 (105 aa).

The protein belongs to the universal ribosomal protein uL24 family. Part of the 50S ribosomal subunit.

One of two assembly initiator proteins, it binds directly to the 5'-end of the 23S rRNA, where it nucleates assembly of the 50S subunit. Its function is as follows. One of the proteins that surrounds the polypeptide exit tunnel on the outside of the subunit. The sequence is that of Large ribosomal subunit protein uL24 from Xylella fastidiosa (strain M12).